Here is a 313-residue protein sequence, read N- to C-terminus: Olfactory receptor 1M1 (313 aa).

Topologically, residues 1–25 are extracellular; sequence MEPRNQTSASQFILLGLSEKPEQET. N-linked (GlcNAc...) asparagine glycosylation is present at N5. A helical membrane pass occupies residues 26 to 49; that stretch reads LLFSLFFCMYLVMVVGNLLIILAI. The Cytoplasmic portion of the chain corresponds to 50 to 57; sequence SIDSHLHT. The chain crosses the membrane as a helical span at residues 58–79; the sequence is PMYFFLANLSLVDFCLATNTIP. Over 80–100 the chain is Extracellular; sequence KMLVSLQTGSKAISYPCCLIQ. An intrachain disulfide couples C97 to C189. A helical transmembrane segment spans residues 101 to 120; it reads MYFFHFFGIVDSVIIAMMAY. At 121–139 the chain is on the cytoplasmic side; it reads DRFVAICHPLHYAKIMSLR. Residues 140–158 form a helical membrane-spanning segment; that stretch reads LCRLLVGALWAFSCFISLT. Residues 159–196 lie on the Extracellular side of the membrane; it reads HILLMARLVFCGSHEVPHYFCDLTPILRLSCTDTSVNR. A helical membrane pass occupies residues 197–219; that stretch reads IFILIVAGMVIATPFVCILASYA. Residues 220-236 lie on the Cytoplasmic side of the membrane; it reads RILVAIMKVPSAGGRKK. Residues 237-259 form a helical membrane-spanning segment; that stretch reads AFSTCSSHLSVVALFYGTTIGVY. Residues 260 to 272 lie on the Extracellular side of the membrane; sequence LCPSSVLTTVKEK. A helical membrane pass occupies residues 273 to 292; that stretch reads ASAVMYTAVTPMLNPFIYSL. Topologically, residues 293–313 are cytoplasmic; that stretch reads RNRDLKGALRKLVNRKITSSS.

The protein belongs to the G-protein coupled receptor 1 family.

Its subcellular location is the cell membrane. Its function is as follows. Odorant receptor. This is Olfactory receptor 1M1 from Homo sapiens (Human).